We begin with the raw amino-acid sequence, 61 residues long: Short neurotoxin 4 (61 aa).

Cystine bridges form between cysteine 3/cysteine 23, cysteine 17/cysteine 40, cysteine 42/cysteine 53, and cysteine 54/cysteine 59.

The protein belongs to the three-finger toxin family. Short-chain subfamily. Type I alpha-neurotoxin sub-subfamily. Expressed by the venom gland.

Its subcellular location is the secreted. Its function is as follows. Binds to muscle nicotinic acetylcholine receptor (nAChR) and inhibit acetylcholine from binding to the receptor, thereby impairing neuromuscular transmission. The protein is Short neurotoxin 4 of Naja annulifera (Banded Egyptian cobra).